Here is a 227-residue protein sequence, read N- to C-terminus: Cytochrome c oxidase subunit 2 (227 aa).

Topologically, residues 1–14 (MAYPFQLGLQDATS) are mitochondrial intermembrane. Residues 15–45 (PIMEELMNFHDHTLMIVFLISSLVLYIISLM) traverse the membrane as a helical segment. Residues 46–59 (LTTKLTHTSTMDAQ) lie on the Mitochondrial matrix side of the membrane. The chain crosses the membrane as a helical span at residues 60 to 87 (EVETIWTILPAAILILIALPSLRILYMM). Topologically, residues 88–227 (DEINNPVLTV…YFENWSASMI (140 aa)) are mitochondrial intermembrane. H161, C196, E198, C200, H204, and M207 together coordinate Cu cation. E198 serves as a coordination point for Mg(2+). At Y218 the chain carries Phosphotyrosine.

The protein belongs to the cytochrome c oxidase subunit 2 family. In terms of assembly, component of the cytochrome c oxidase (complex IV, CIV), a multisubunit enzyme composed of 14 subunits. The complex is composed of a catalytic core of 3 subunits MT-CO1, MT-CO2 and MT-CO3, encoded in the mitochondrial DNA, and 11 supernumerary subunits COX4I, COX5A, COX5B, COX6A, COX6B, COX6C, COX7A, COX7B, COX7C, COX8 and NDUFA4, which are encoded in the nuclear genome. The complex exists as a monomer or a dimer and forms supercomplexes (SCs) in the inner mitochondrial membrane with NADH-ubiquinone oxidoreductase (complex I, CI) and ubiquinol-cytochrome c oxidoreductase (cytochrome b-c1 complex, complex III, CIII), resulting in different assemblies (supercomplex SCI(1)III(2)IV(1) and megacomplex MCI(2)III(2)IV(2)). Found in a complex with TMEM177, COA6, COX18, COX20, SCO1 and SCO2. Interacts with TMEM177 in a COX20-dependent manner. Interacts with COX20. Interacts with COX16. Cu cation serves as cofactor.

The protein localises to the mitochondrion inner membrane. The catalysed reaction is 4 Fe(II)-[cytochrome c] + O2 + 8 H(+)(in) = 4 Fe(III)-[cytochrome c] + 2 H2O + 4 H(+)(out). Component of the cytochrome c oxidase, the last enzyme in the mitochondrial electron transport chain which drives oxidative phosphorylation. The respiratory chain contains 3 multisubunit complexes succinate dehydrogenase (complex II, CII), ubiquinol-cytochrome c oxidoreductase (cytochrome b-c1 complex, complex III, CIII) and cytochrome c oxidase (complex IV, CIV), that cooperate to transfer electrons derived from NADH and succinate to molecular oxygen, creating an electrochemical gradient over the inner membrane that drives transmembrane transport and the ATP synthase. Cytochrome c oxidase is the component of the respiratory chain that catalyzes the reduction of oxygen to water. Electrons originating from reduced cytochrome c in the intermembrane space (IMS) are transferred via the dinuclear copper A center (CU(A)) of subunit 2 and heme A of subunit 1 to the active site in subunit 1, a binuclear center (BNC) formed by heme A3 and copper B (CU(B)). The BNC reduces molecular oxygen to 2 water molecules using 4 electrons from cytochrome c in the IMS and 4 protons from the mitochondrial matrix. The polypeptide is Cytochrome c oxidase subunit 2 (MT-CO2) (Praomys tullbergi (Tullberg's soft-furred rat)).